The primary structure comprises 140 residues: RxLR effector protein CRE9 (140 aa).

The signal sequence occupies residues 1–24 (MRTSVFVALVVATFVATCISFTSA). The RxLR-dEER signature appears at 43–61 (RTLAEADDWWLASTNTEER). Residues 119–139 (LKILYGALLAGLIIVGVEAML) form a helical membrane-spanning segment.

This sequence belongs to the RxLR effector family.

It localises to the secreted. It is found in the host cell. The protein localises to the membrane. Functionally, effector that is involved in host plant infection. Contributes to virulence during the early infection stage, by inhibiting plant defense responses induced by both PAMP-triggered immunity (PTI) and effector-triggered immunity (ETI). The chain is RxLR effector protein CRE9 from Phytophthora infestans (strain T30-4) (Potato late blight agent).